The sequence spans 430 residues: MLYEKFEHNINNLIGGFGLSKIAIAVSGGSDSVALLYLANIWAKKNNIELFVLSVDHNLRDQSKQEIEYIQNTANDLGLKFYSLFFDHQNNFSNLQERARKGRYDLMTSLCQKLDILVLLTAHHEDDYIENFCLRLERKSGVFGLSSSSVNWHNNTQIIRPLFNIPKSELVNYLATNNIKWFEDQSNLSTKYRRNTIRQKLAKEEVYIKDDIITQQIKVNELIENKFKPELISAIAESVKISEYGFAFLDLIKFSGFSQEVRVQLINFLLIIISGQQRSARFYSVEPILKLIRQSLDFKNTLHGCVIKRMQNKLLIYREFGKKLPESKLLLDKQLVWDNRFRITKNHDIENCVATYLSLEDYKIIKEKLDLEVLKNLSCGNHNAILFTLPIVKILEKVVAIPHISYYDNDIKSFNVSFAPDFTSRFTHFY.

27-32 (SGGSDS) is a binding site for ATP.

It belongs to the tRNA(Ile)-lysidine synthase family.

It is found in the cytoplasm. The catalysed reaction is cytidine(34) in tRNA(Ile2) + L-lysine + ATP = lysidine(34) in tRNA(Ile2) + AMP + diphosphate + H(+). In terms of biological role, ligates lysine onto the cytidine present at position 34 of the AUA codon-specific tRNA(Ile) that contains the anticodon CAU, in an ATP-dependent manner. Cytidine is converted to lysidine, thus changing the amino acid specificity of the tRNA from methionine to isoleucine. The protein is tRNA(Ile)-lysidine synthase of Rickettsia bellii (strain OSU 85-389).